The sequence spans 297 residues: GTP cyclohydrolase FolE2 (297 aa).

2 disordered regions span residues 1-21 and 180-207; these read MTHASALGLTQHIPDTQSERD and IRAELMEPPGDRRRPPPPGGGESTRERP.

This sequence belongs to the GTP cyclohydrolase IV family.

It catalyses the reaction GTP + H2O = 7,8-dihydroneopterin 3'-triphosphate + formate + H(+). It participates in cofactor biosynthesis; 7,8-dihydroneopterin triphosphate biosynthesis; 7,8-dihydroneopterin triphosphate from GTP: step 1/1. Its function is as follows. Converts GTP to 7,8-dihydroneopterin triphosphate. The sequence is that of GTP cyclohydrolase FolE2 from Methylibium petroleiphilum (strain ATCC BAA-1232 / LMG 22953 / PM1).